A 351-amino-acid polypeptide reads, in one-letter code: Formyl peptide receptor-related sequence 1 (351 aa).

The Extracellular portion of the chain corresponds to 1–27 (METNYSIPLNGSDVVIYDSTISRVLWI). N-linked (GlcNAc...) asparagine glycosylation is found at Asn4 and Asn10. A helical membrane pass occupies residues 28–50 (LSMVVVSITFFLGVLGNGLVIWV). The Cytoplasmic portion of the chain corresponds to 51–61 (AGFRMPHTVTT). A helical membrane pass occupies residues 62–83 (IWYLNLALADFSFTATLPFLLV). Topologically, residues 84-100 (EMAMKEKWPFGWFLCKL) are extracellular. Cys98 and Cys176 form a disulfide bridge. Residues 101–121 (VHIAVDVNLFGSVFLIAVIAL) form a helical membrane-spanning segment. Topologically, residues 122–140 (DRCICVLHPVWAQNHRTVS) are cytoplasmic. Residues 141–162 (LARNVVVGSWIFALILTLPLFL) form a helical membrane-spanning segment. At 163–205 (FLTTVRDARGDVHCRLSFVSWGNSVEERLNTAITFVTTRGIIR) the chain is on the extracellular side. The helical transmembrane segment at 206-226 (FIVSFSLPMSFVAICYGLITT) threads the bilayer. The Cytoplasmic portion of the chain corresponds to 227–242 (KIHKKAFVNSSRPFRV). A helical membrane pass occupies residues 243 to 266 (LTGVVASFFICWFPFQLVALLGTV). The Extracellular portion of the chain corresponds to 267–286 (WLKEMQFSGSYKIIGRLVNP). Residues 287-306 (TSSLAFFNSCLNPILYVFMG) form a helical membrane-spanning segment. Residues 307–351 (QDFQERLIHSLSSRLQRALSEDSGHISDTRTNLASLPEDIEIKAI) lie on the Cytoplasmic side of the membrane.

Belongs to the G-protein coupled receptor 1 family. In terms of tissue distribution, expressed exclusively in vomeronasal neurons. Expressed in 0.6 % of a subset of sensory neurons located in the basal layer of the vomeronasal organ. Each neuron appears to express only one receptor gene. Expressed mostly in neutrophils, followed by spleen and lung and expressed at very low levels in heart and liver.

It localises to the cell membrane. Functionally, low affinity receptor for N-formyl-methionyl peptides. Receptor for lipoxin A4. May have an olfactory function associated with the identification of pathogens or of pathogenic states. The polypeptide is Formyl peptide receptor-related sequence 1 (Fpr-s1) (Mus musculus (Mouse)).